Here is a 374-residue protein sequence, read N- to C-terminus: 12-oxophytodienoate reductase 2 (374 aa).

The residue at position 1 (Met1) is an N-acetylmethionine. Residues 33–35 (PLT), Ala66, and Gln108 contribute to the FMN site. His185 serves as a coordination point for substrate. The Proton donor role is filled by Tyr190. Arg237 contacts FMN. Arg277 is a substrate binding site. FMN contacts are provided by residues 305 to 307 (AGG) and 328 to 329 (GR).

This sequence belongs to the NADH:flavin oxidoreductase/NADH oxidase family. It depends on FMN as a cofactor. In terms of tissue distribution, expressed at highest levels in roots and cotyledons, and at lower levels in leaves, shoots and flowers (sepals, petals, maturing siliques and developing pollen).

The protein resides in the cytoplasm. It catalyses the reaction (1S,2S)-OPC-8 + NADP(+) = (9S,13S,15Z)-12-oxophyto-10,15-dienoate + NADPH + H(+). The enzyme catalyses a 4,5-didehydrojasmonate + NADPH + H(+) = a jasmonate + NADP(+). It participates in lipid metabolism; oxylipin biosynthesis. Functionally, specifically cleaves olefinic bonds in alpha,beta-unsaturated carbonyls and may be involved in detoxification or modification of these reactive compounds. May be involved in the biosynthesis or metabolism of oxylipin signaling molecules. In vitro, reduces 9R,13R-12-oxophytodienoic acid (9R,13R-OPDA) to 9R,13R-OPC-8:0, but only poorly 9S,13S-OPDA, the natural precursor of jasmonic acid (JA). Can detoxify the explosive 2,4,6-trinitrotoluene (TNT) in vitro and in vivo by catalyzing its nitroreduction to form hydroxylamino-dinitrotoluene (HADNT). Functions in an alternative and OPR3-independent pathway for JA biosynthesis. Catalyzes the NADPH-dependent reduction of 4,5-didehydrojasmonates to jasmonates. This chain is 12-oxophytodienoate reductase 2, found in Arabidopsis thaliana (Mouse-ear cress).